We begin with the raw amino-acid sequence, 158 residues long: Protein NrdI (158 aa).

It belongs to the NrdI family.

Its function is as follows. Probably involved in ribonucleotide reductase function. This chain is Protein NrdI, found in Rhodococcus jostii (strain RHA1).